A 179-amino-acid chain; its full sequence is Large ribosomal subunit protein uL5 (179 aa).

Belongs to the universal ribosomal protein uL5 family. Part of the 50S ribosomal subunit; part of the 5S rRNA/L5/L18/L25 subcomplex. Contacts the 5S rRNA and the P site tRNA. Forms a bridge to the 30S subunit in the 70S ribosome.

Functionally, this is one of the proteins that bind and probably mediate the attachment of the 5S RNA into the large ribosomal subunit, where it forms part of the central protuberance. In the 70S ribosome it contacts protein S13 of the 30S subunit (bridge B1b), connecting the 2 subunits; this bridge is implicated in subunit movement. Contacts the P site tRNA; the 5S rRNA and some of its associated proteins might help stabilize positioning of ribosome-bound tRNAs. The sequence is that of Large ribosomal subunit protein uL5 from Xylella fastidiosa (strain 9a5c).